We begin with the raw amino-acid sequence, 606 residues long: Vitamin B12 transporter BtuB (606 aa).

The signal sequence occupies residues 1–21; sequence MKKTLLAVALAPLCLPSQVFA. Positions 28–35 match the TonB box motif; the sequence is DVMVVTAN. A TBDR plug domain is found at 40-152; sequence PIKNVIAPIS…IGGVLNIITA (113 aa). One can recognise a TBDR beta-barrel domain in the interval 157-606; sequence ESVAEVTAGG…SYYATATYKF (450 aa). A TonB C-terminal box motif is present at residues 589–606; sequence ETYNVQERSYYATATYKF.

It belongs to the TonB-dependent receptor family. BtuB (TC 1.B.14.3.1) subfamily.

It localises to the cell outer membrane. Its function is as follows. Involved in the active translocation of vitamin B12 (cyanocobalamin) across the outer membrane to the periplasmic space. It derives its energy for transport by interacting with the trans-periplasmic membrane protein TonB. The protein is Vitamin B12 transporter BtuB of Photobacterium profundum (strain SS9).